A 428-amino-acid chain; its full sequence is Inward rectifier potassium channel 2 (428 aa).

Residues 1 to 81 lie on the Cytoplasmic side of the membrane; that stretch reads MGSVRTNRYS…IFTTCVDIRW (81 aa). An S-nitrosocysteine modification is found at Cys-76. Residues 82 to 106 traverse the membrane as a helical segment; the sequence is RWMLVIFCLAFVLSWLFFGCVFWLI. Residues 107–128 lie on the Extracellular side of the membrane; sequence ALLHGDLDTSKVSKACVSEVNS. The helical; Pore-forming intramembrane region spans 129–140; sequence FTAAFLFSIETQ. The segment at residues 141 to 147 is an intramembrane region (pore-forming); it reads TTIGYGF. Positions 142 to 147 match the Selectivity filter motif; sequence TIGYGF. The Extracellular segment spans residues 148–156; the sequence is RCVTDECPI. A helical transmembrane segment spans residues 157-178; sequence AVFMVVFQSIVGCIIDAFIIGA. Residues 179 to 428 lie on the Cytoplasmic side of the membrane; the sequence is VMAKMAKPKK…PRPLRRESEI (250 aa). Positions 181–208 are polyphosphoinositide (PIP2)-binding; that stretch reads AKMAKPKKRNETLVFSHNAVIAMRDGKL. Positions 383–428 are disordered; the sequence is TSKEEEEDSENGVPESTSTDSPPGIDLHNQASVPLEPRPLRRESEI. The short motif at 426–428 is the PDZ-binding element; sequence SEI.

The protein belongs to the inward rectifier-type potassium channel (TC 1.A.2.1) family. KCNJ2 subfamily. As to quaternary structure, homotetramer. Homomultimeric and heteromultimeric association with KCNJ4/Kir2.3. Can form heteromeric channels with Kir2.6/KCNJ18. Associates, via its PDZ-recognition domain, with a complex containing LIN7A, LIN7B, LIN7C, DLG1, CASK and APBA1. Post-translationally, S-nitrosylation increases the open probability and inward rectifying currents. Prominently expressed in the central nervous system. Also found in other excitable tissues such as heart and skeletal muscle.

Its subcellular location is the cell membrane. It is found in the sarcolemma. It localises to the T-tubule. It catalyses the reaction K(+)(in) = K(+)(out). With respect to regulation, activated by phosphatidylinositol 4,5 biphosphate (PtdIns(4,5)P2). Its function is as follows. Inward rectifier potassium channels are characterized by a greater tendency to allow potassium to flow into the cell rather than out of it. Their voltage dependence is regulated by the concentration of extracellular potassium; as external potassium is raised, the voltage range of the channel opening shifts to more positive voltages. The inward rectification is mainly due to the blockage of outward current by internal magnesium. Can be blocked by extracellular barium and cesium. Probably participates in establishing action potential waveform and excitability of neuronal and muscle tissues. The protein is Inward rectifier potassium channel 2 (Kcnj2) of Mus musculus (Mouse).